Consider the following 162-residue polypeptide: Large ribosomal subunit protein uL15 (162 aa).

The interval 1 to 41 is disordered; that stretch reads MKLSDIADNAGSRKKRMRVGRGIGSGKGKTAGRGGKGQTAR. Residues 21–37 show a composition bias toward gly residues; sequence RGIGSGKGKTAGRGGKG.

This sequence belongs to the universal ribosomal protein uL15 family. Part of the 50S ribosomal subunit.

Binds to the 23S rRNA. This chain is Large ribosomal subunit protein uL15, found in Rhodopseudomonas palustris (strain BisB18).